The primary structure comprises 357 residues: tRNA-specific 2-thiouridylase MnmA (357 aa).

Residues 8–15 and I34 contribute to the ATP site; that span reads GISGGVDS. C96 (nucleophile) is an active-site residue. C96 and C192 form a disulfide bridge. Position 120 (G120) interacts with ATP. The interaction with tRNA stretch occupies residues 142–144; it reads KDQ. The Cysteine persulfide intermediate role is filled by C192. The tract at residues 301 to 302 is interaction with tRNA; that stretch reads RY.

Belongs to the MnmA/TRMU family.

The protein resides in the cytoplasm. The enzyme catalyses S-sulfanyl-L-cysteinyl-[protein] + uridine(34) in tRNA + AH2 + ATP = 2-thiouridine(34) in tRNA + L-cysteinyl-[protein] + A + AMP + diphosphate + H(+). Its function is as follows. Catalyzes the 2-thiolation of uridine at the wobble position (U34) of tRNA, leading to the formation of s(2)U34. The sequence is that of tRNA-specific 2-thiouridylase MnmA from Chlorobium phaeobacteroides (strain DSM 266 / SMG 266 / 2430).